The chain runs to 391 residues: MSGPVPSRARVYTDVNTHRPREYWDYESHVVEWGNQDDYQLVRKLGRGKYSEVFEAINITNNEKVVVKILKPVKKKKIKREIKILENLRGGPNIITLADIVKDPVSRTPALVFEHVNNTDFKQLYQTLTDYDIRFYMYEILKALDYCHSMGIMHRDVKPHNVMIDHEHRKLRLIDWGLAEFYHPGQEYNVRVASRYFKGPELLVDYQMYDYSLDMWRLGCMLASMIFRKEPFFHGRDNYDQLVRIAKFLGTEDLYGYIDKYNIELDPRFNDILGRHSRKRWERFVHSENQHLVSPEALDFLDKLLRYDHQSRLTAREAMEHPYFYTVVKDQARMGSSSMPGGSTPVSSANVMSGISSVPTPSPLGPLAGSPVIAAANPLGMPVPAATGAQQ.

Residues Y39–F324 enclose the Protein kinase domain. ATP contacts are provided by residues L45–V53 and K68. The active-site Proton acceptor is the D156.

The protein belongs to the protein kinase superfamily. Ser/Thr protein kinase family. CK2 subfamily. As to quaternary structure, heterotetramer composed of two catalytic subunits (alpha chain and/or alpha' chain) and two regulatory subunits (beta chains). Interacts with PML. In terms of tissue distribution, detected in blood platelets and megakaryocyte cell lines. Poorly expressed in lung. Highly expressed in lung tumor tissues.

The enzyme catalyses L-seryl-[protein] + ATP = O-phospho-L-seryl-[protein] + ADP + H(+). It carries out the reaction L-threonyl-[protein] + ATP = O-phospho-L-threonyl-[protein] + ADP + H(+). Probable catalytic subunit of a constitutively active serine/threonine-protein kinase complex that phosphorylates a large number of substrates containing acidic residues C-terminal to the phosphorylated serine or threonine. Amplification-dependent oncogene; promotes cell proliferation and tumorigenesis by down-regulating expression of the tumor suppressor protein, PML. May play a role in the pathogenesis of the lung cancer development and progression. In Homo sapiens (Human), this protein is Casein kinase II subunit alpha 3 (CSNK2A3).